Here is a 165-residue protein sequence, read N- to C-terminus: Transmembrane protein 128 (165 aa).

4 helical membrane-spanning segments follow: residues asparagine 49–phenylalanine 69, tryptophan 81–valine 101, leucine 119–tryptophan 139, and phenylalanine 144–leucine 164.

Its subcellular location is the membrane. The polypeptide is Transmembrane protein 128 (TMEM128) (Bos taurus (Bovine)).